The primary structure comprises 331 residues: MWLWEDQGGLLGPFSFVLVLLLVVTRSPFNACVLTGSLYLLLRFFSFEPVPSRRALQVLKPRDRVSAIAHRGGSHDAPENTLAAIRQAAKNGATGVELDIEFTSDGVPVLMHDNTVDRTTDGSGRLCDLTFEQVRKLNPAANHRLRNEFPDERIPTLREAVTECLCHNLTIFFDVKGHADMASAALKNIYMEFPQLYNNSMVCSFLPEVIYKMRQTDQKVITALTHRPWSLSHTGDGKPRYSVFWKQSVFVVLDILLDWSMHNVLWYLCGISAFLMQKDFVSPDYLKKWSAKGIQVVSWTVNTFDEKNYYESHLGSSYITDSMLEDCAPHF.

At 1 to 3 (MWL) the chain is on the cytoplasmic side. The chain crosses the membrane as a helical span at residues 4–24 (WEDQGGLLGPFSFVLVLLLVV). Residues 25–248 (TRSPFNACVL…PRYSVFWKQS (224 aa)) are Lumenal-facing. Residues 65-331 (VSAIAHRGGS…SMLEDCAPHF (267 aa)) form the GP-PDE domain. Mg(2+) is bound by residues glutamate 97 and aspartate 99. N-linked (GlcNAc...) asparagine glycosylation occurs at asparagine 168. Aspartate 174 provides a ligand contact to Mg(2+). The chain crosses the membrane as a helical span at residues 249-269 (VFVVLDILLDWSMHNVLWYLC). At 270 to 331 (GISAFLMQKD…SMLEDCAPHF (62 aa)) the chain is on the cytoplasmic side.

The protein belongs to the glycerophosphoryl diester phosphodiesterase family. In terms of assembly, interacts with PRAF2. Interacts with RGS16. Requires Mg(2+) as cofactor. In terms of processing, N-glycosylated. Detected in heart, brain, lung, liver, skeletal muscle, kidney, pituitary and testis.

The protein localises to the cell membrane. It localises to the cytoplasmic vesicle membrane. The enzyme catalyses sn-glycero-3-phospho-1D-myo-inositol + H2O = myo-inositol + sn-glycerol 3-phosphate + H(+). It catalyses the reaction 1-O-(1Z-octadecenyl)-sn-glycero-3-phospho-(N-5Z,8Z,11Z,14Z-eicosatetraenoyl)-ethanolamine + H2O = 1-O-(1Z-octadecenyl)-sn-glycero-3-phosphate + N-(5Z,8Z,11Z,14Z-eicosatetraenoyl)-ethanolamine + H(+). The catalysed reaction is 1-O-(1Z-octadecenyl)-sn-glycero-3-phospho-(N-9Z-octadecenoyl)-ethanolamine + H2O = 1-O-(1Z-octadecenyl)-sn-glycero-3-phosphate + N-(9Z-octadecenoyl) ethanolamine + H(+). It carries out the reaction 1-O-(1Z-octadecenyl)-sn-glycero-3-phospho-N-hexadecanoyl-ethanolamine + H2O = 1-O-(1Z-octadecenyl)-sn-glycero-3-phosphate + N-hexadecanoylethanolamine + H(+). The enzyme catalyses N-(4Z,7Z,10Z,13Z,16Z,19Z)-docosahexaenoyl-sn-glycero-3-phosphoethanolamine + H2O = N-(4Z,7Z,10Z,13Z,16Z,19Z)-docosahexaenoyl ethanolamine + sn-glycerol 3-phosphate + H(+). It catalyses the reaction N-eicosanoyl-sn-glycero-3-phosphoethanolamine + H2O = N-eicosanoyl ethanolamine + sn-glycerol 3-phosphate + H(+). The catalysed reaction is N-hexadecanoyl-sn-glycero-3-phosphoethanolamine + H2O = N-hexadecanoylethanolamine + sn-glycerol 3-phosphate + H(+). It carries out the reaction N-(9Z-octadecenoyl)-sn-glycero-3-phosphoethanolamine + H2O = N-(9Z-octadecenoyl) ethanolamine + sn-glycerol 3-phosphate + H(+). The enzyme catalyses N-(5Z,8Z,11Z,14Z-eicosatetraenoyl)-sn-glycero-3-phosphoethanolamine + H2O = N-(5Z,8Z,11Z,14Z-eicosatetraenoyl)-ethanolamine + sn-glycerol 3-phosphate + H(+). Its activity is regulated as follows. Inhibited by EDTA, calcium chloride, and zinc chloride. Enhanced by magnesium chloride. Glycerophosphodiester phosphodiesterase activity can be modulated by G-protein signaling pathways. Its function is as follows. Hydrolyzes the phosphodiester bond of glycerophosphodiesters such as glycerophosphoinositol (GroPIns) and glycerophosphoethanolamine (GroPEth), to yield a glycerol phosphate and an alcohol. Hydrolyzes glycerophospho-N-acylethanolamines to N-acylethanolamines in the brain and participates in bioactive N-acylethanolamine biosynthesis such as anandamide (an endocannabinoid), N-palmitoylethanolamine (an anti-inflammatory), and N-oleoylethanolamine (an anorexic). In addition, has a lysophospholipase D activity by hydrolyzing N-acyl-lysoplasmenylethanolamine (N-acyl-lysoPlsEt) to N-acylethanolamine. However lysophospholipase D activity is lower than glycerophosphodiester phosphodiesterase activity. Has little or no activity towards glycerophosphocholine. This Rattus norvegicus (Rat) protein is Glycerophosphodiester phosphodiesterase 1.